A 259-amino-acid chain; its full sequence is E3 ubiquitin-protein ligase RNF170 (259 aa).

Topologically, residues 1–25 (MAKYQGEVQSLKLDDDSVIEGVSDQ) are lumenal. Residues 26 to 46 (VLVAVVVSLALIATLVYALFS) form a helical membrane-spanning segment. Residues 47 to 202 (RNAHQNIHPE…GGLFWMFRIR (156 aa)) are Cytoplasmic-facing. Residues 88-131 (CPICLHQASLPVETNCGHLFCGTCIVAYWRYGSWLGAISCPICR) form an RING-type zinc finger. Residues 203-223 (IILCLMGAFFYLISPLDFVPE) form a helical membrane-spanning segment. Position 224 (Ala224) is a topological domain, lumenal. Residues 225–245 (LFGILGFLDDFFVIFLLLIYI) form a helical membrane-spanning segment. Topologically, residues 246-259 (SIMYREVITQRLNR) are cytoplasmic.

In terms of assembly, constitutively associated with the ERLIN1/ERLIN 2 complex. Interacts with activated ITPR1.

It is found in the endoplasmic reticulum membrane. It catalyses the reaction S-ubiquitinyl-[E2 ubiquitin-conjugating enzyme]-L-cysteine + [acceptor protein]-L-lysine = [E2 ubiquitin-conjugating enzyme]-L-cysteine + N(6)-ubiquitinyl-[acceptor protein]-L-lysine.. The protein operates within protein modification; protein ubiquitination. In terms of biological role, E3 ubiquitin-protein ligase. Plays an essential role in stimulus-induced inositol 1,4,5-trisphosphate receptor type 1 (ITPR1) ubiquitination and degradation via the endoplasmic reticulum-associated degradation (ERAD) pathway. Also involved in ITPR1 turnover in resting cells. Selectively inhibits the TLR3-triggered innate immune response by promoting the 'Lys-48'-linked polyubiquitination and degradation of TLR3. The protein is E3 ubiquitin-protein ligase RNF170 (RNF170) of Bos taurus (Bovine).